Here is a 469-residue protein sequence, read N- to C-terminus: UDP-N-acetylmuramate--L-alanine ligase (469 aa).

ATP is bound at residue 118-124; that stretch reads GTHGKTT.

The protein belongs to the MurCDEF family.

It is found in the cytoplasm. It carries out the reaction UDP-N-acetyl-alpha-D-muramate + L-alanine + ATP = UDP-N-acetyl-alpha-D-muramoyl-L-alanine + ADP + phosphate + H(+). Its pathway is cell wall biogenesis; peptidoglycan biosynthesis. Functionally, cell wall formation. The polypeptide is UDP-N-acetylmuramate--L-alanine ligase (Lachnoclostridium phytofermentans (strain ATCC 700394 / DSM 18823 / ISDg) (Clostridium phytofermentans)).